A 466-amino-acid polypeptide reads, in one-letter code: Ribulose bisphosphate carboxylase large chain (466 aa).

Lys-5 carries the N6,N6,N6-trimethyllysine modification. Asn-114 and Thr-164 together coordinate substrate. Residue Lys-166 is the Proton acceptor of the active site. Lys-168 contributes to the substrate binding site. Mg(2+)-binding residues include Lys-192, Asp-194, and Glu-195. Lys-192 is subject to N6-carboxylysine. Residue His-285 is the Proton acceptor of the active site. Substrate-binding residues include Arg-286, His-318, and Ser-370.

This sequence belongs to the RuBisCO large chain family. Type I subfamily. As to quaternary structure, heterohexadecamer of 8 large chains and 8 small chains; disulfide-linked. The disulfide link is formed within the large subunit homodimers. Mg(2+) serves as cofactor. The disulfide bond which can form in the large chain dimeric partners within the hexadecamer appears to be associated with oxidative stress and protein turnover.

Its subcellular location is the plastid. The protein localises to the chloroplast. The catalysed reaction is 2 (2R)-3-phosphoglycerate + 2 H(+) = D-ribulose 1,5-bisphosphate + CO2 + H2O. The enzyme catalyses D-ribulose 1,5-bisphosphate + O2 = 2-phosphoglycolate + (2R)-3-phosphoglycerate + 2 H(+). Its function is as follows. RuBisCO catalyzes two reactions: the carboxylation of D-ribulose 1,5-bisphosphate, the primary event in carbon dioxide fixation, as well as the oxidative fragmentation of the pentose substrate in the photorespiration process. Both reactions occur simultaneously and in competition at the same active site. The sequence is that of Ribulose bisphosphate carboxylase large chain from Betula nigra (River birch).